Here is a 97-residue protein sequence, read N- to C-terminus: Co-chaperonin GroES (97 aa).

The protein belongs to the GroES chaperonin family. In terms of assembly, heptamer of 7 subunits arranged in a ring. Interacts with the chaperonin GroEL.

Its subcellular location is the cytoplasm. Functionally, together with the chaperonin GroEL, plays an essential role in assisting protein folding. The GroEL-GroES system forms a nano-cage that allows encapsulation of the non-native substrate proteins and provides a physical environment optimized to promote and accelerate protein folding. GroES binds to the apical surface of the GroEL ring, thereby capping the opening of the GroEL channel. The polypeptide is Co-chaperonin GroES (Burkholderia cepacia (Pseudomonas cepacia)).